The sequence spans 142 residues: Nucleoside diphosphate kinase (142 aa).

ATP-binding residues include Lys11, Phe59, Arg87, Thr93, Arg104, and Asn114. The Pros-phosphohistidine intermediate role is filled by His117.

It belongs to the NDK family. In terms of assembly, homotetramer. It depends on Mg(2+) as a cofactor.

The protein resides in the cytoplasm. It carries out the reaction a 2'-deoxyribonucleoside 5'-diphosphate + ATP = a 2'-deoxyribonucleoside 5'-triphosphate + ADP. The catalysed reaction is a ribonucleoside 5'-diphosphate + ATP = a ribonucleoside 5'-triphosphate + ADP. Its function is as follows. Major role in the synthesis of nucleoside triphosphates other than ATP. The ATP gamma phosphate is transferred to the NDP beta phosphate via a ping-pong mechanism, using a phosphorylated active-site intermediate. In Photobacterium profundum (strain SS9), this protein is Nucleoside diphosphate kinase.